A 140-amino-acid polypeptide reads, in one-letter code: Organic hydroperoxide resistance protein-like (140 aa).

It belongs to the OsmC/Ohr family.

In Staphylococcus aureus (strain MSSA476), this protein is Organic hydroperoxide resistance protein-like.